The primary structure comprises 146 residues: Large ribosomal subunit protein uL15 (146 aa).

Basic and acidic residues predominate over residues 1-18; it reads MKLHELKPTPGSRHERNR. Residues 1-69 are disordered; the sequence is MKLHELKPTP…RLPKRGFNNP (69 aa). Positions 42–52 are enriched in gly residues; that stretch reads SGGGVRPGFEG.

It belongs to the universal ribosomal protein uL15 family. In terms of assembly, part of the 50S ribosomal subunit.

In terms of biological role, binds to the 23S rRNA. The sequence is that of Large ribosomal subunit protein uL15 from Exiguobacterium sp. (strain ATCC BAA-1283 / AT1b).